Consider the following 204-residue polypeptide: Urease accessory protein UreG (204 aa).

12–19 (GPVGSGKT) lines the GTP pocket.

Belongs to the SIMIBI class G3E GTPase family. UreG subfamily. As to quaternary structure, homodimer. UreD, UreF and UreG form a complex that acts as a GTP-hydrolysis-dependent molecular chaperone, activating the urease apoprotein by helping to assemble the nickel containing metallocenter of UreC. The UreE protein probably delivers the nickel.

The protein localises to the cytoplasm. Its function is as follows. Facilitates the functional incorporation of the urease nickel metallocenter. This process requires GTP hydrolysis, probably effectuated by UreG. This chain is Urease accessory protein UreG, found in Pseudomonas aeruginosa (strain LESB58).